A 949-amino-acid polypeptide reads, in one-letter code: Glycine dehydrogenase (decarboxylating) (949 aa).

An N6-(pyridoxal phosphate)lysine modification is found at Lys-697.

Belongs to the GcvP family. As to quaternary structure, the glycine cleavage system is composed of four proteins: P, T, L and H. Requires pyridoxal 5'-phosphate as cofactor.

The catalysed reaction is N(6)-[(R)-lipoyl]-L-lysyl-[glycine-cleavage complex H protein] + glycine + H(+) = N(6)-[(R)-S(8)-aminomethyldihydrolipoyl]-L-lysyl-[glycine-cleavage complex H protein] + CO2. In terms of biological role, the glycine cleavage system catalyzes the degradation of glycine. The P protein binds the alpha-amino group of glycine through its pyridoxal phosphate cofactor; CO(2) is released and the remaining methylamine moiety is then transferred to the lipoamide cofactor of the H protein. This chain is Glycine dehydrogenase (decarboxylating), found in Deinococcus radiodurans (strain ATCC 13939 / DSM 20539 / JCM 16871 / CCUG 27074 / LMG 4051 / NBRC 15346 / NCIMB 9279 / VKM B-1422 / R1).